Here is a 271-residue protein sequence, read N- to C-terminus: uncharacterized protein (271 aa).

This sequence belongs to the HAD-like hydrolase superfamily.

This is an uncharacterized protein from Staphylococcus aureus (strain NCTC 8325 / PS 47).